A 342-amino-acid polypeptide reads, in one-letter code: Ketol-acid reductoisomerase (NADP(+)) (342 aa).

Positions 2 to 181 constitute a KARI N-terminal Rossmann domain; the sequence is VKVYYNGDIK…GGARAGVLET (180 aa). NADP(+) is bound by residues 25 to 28, Arg-48, Ser-52, and 82 to 85; these read YGSQ and DEQQ. His-107 is an active-site residue. Gly-133 is an NADP(+) binding site. Residues 182 to 327 form the KARI C-terminal knotted domain; it reads TFKEETETDL…RQLREMMPFV (146 aa). 4 residues coordinate Mg(2+): Asp-190, Glu-194, Glu-226, and Glu-230. Ser-251 lines the substrate pocket.

The protein belongs to the ketol-acid reductoisomerase family. Mg(2+) is required as a cofactor.

It catalyses the reaction (2R)-2,3-dihydroxy-3-methylbutanoate + NADP(+) = (2S)-2-acetolactate + NADPH + H(+). The catalysed reaction is (2R,3R)-2,3-dihydroxy-3-methylpentanoate + NADP(+) = (S)-2-ethyl-2-hydroxy-3-oxobutanoate + NADPH + H(+). Its pathway is amino-acid biosynthesis; L-isoleucine biosynthesis; L-isoleucine from 2-oxobutanoate: step 2/4. The protein operates within amino-acid biosynthesis; L-valine biosynthesis; L-valine from pyruvate: step 2/4. Functionally, involved in the biosynthesis of branched-chain amino acids (BCAA). Catalyzes an alkyl-migration followed by a ketol-acid reduction of (S)-2-acetolactate (S2AL) to yield (R)-2,3-dihydroxy-isovalerate. In the isomerase reaction, S2AL is rearranged via a Mg-dependent methyl migration to produce 3-hydroxy-3-methyl-2-ketobutyrate (HMKB). In the reductase reaction, this 2-ketoacid undergoes a metal-dependent reduction by NADPH to yield (R)-2,3-dihydroxy-isovalerate. In Bacillus velezensis (strain DSM 23117 / BGSC 10A6 / LMG 26770 / FZB42) (Bacillus amyloliquefaciens subsp. plantarum), this protein is Ketol-acid reductoisomerase (NADP(+)).